Reading from the N-terminus, the 179-residue chain is MRQVPVGTRLVLALAFVLVWGSSVQGYPARRARYQWVRCKPDGIFANCIEEKGPRFDLIAEESNVGPPMTDPVLMRGFPNDFFPISDDYSGSGSGSGSGSGSGSGSGSGSGSGSGSGSGSGSGSGSGSGSGSGSGSGSLADMEWEYQPTDENNIVYFNYGPFDRMLTEQNQEQPGDFII.

A signal peptide spans 1–26; it reads MRQVPVGTRLVLALAFVLVWGSSVQG. The propeptide at 27–75 is activation peptide; it reads YPARRARYQWVRCKPDGIFANCIEEKGPRFDLIAEESNVGPPMTDPVLM. C39 and C48 are joined by a disulfide. Residues 86-145 are disordered; sequence SDDYSGSGSGSGSGSGSGSGSGSGSGSGSGSGSGSGSGSGSGSGSGSGSGSGSLADMEWE. 2 O-linked (Xyl...) (glycosaminoglycan) serine glycosylation sites follow: S90 and S92. A run of 24 repeats spans residues 90-91, 92-93, 94-95, 96-97, 98-99, 100-101, 102-103, 104-105, 106-107, 108-109, 110-111, 112-113, 114-115, 116-117, 118-119, 120-121, 122-123, 124-125, 126-127, 128-129, 130-131, 132-133, 134-135, and 136-137. The tract at residues 90–137 is 24 X 2 AA tandem repeats of S-G; sequence SGSGSGSGSGSGSGSGSGSGSGSGSGSGSGSGSGSGSGSGSGSGSGSG. Positions 92-136 are enriched in gly residues; that stretch reads SGSGSGSGSGSGSGSGSGSGSGSGSGSGSGSGSGSGSGSGSGSGS. 6 O-linked (Xyl...) (glycosaminoglycan) serine glycosylation sites follow: S96, S98, S100, S102, S104, and S106.

The protein belongs to the serglycin family. Binds to activated CD44 and to GZMB. In terms of processing, O-glycosylated; contains chondroitin sulfate and heparan sulfate.

The protein localises to the cytoplasmic granule. It is found in the cytolytic granule. The protein resides in the secreted. It localises to the extracellular space. Its subcellular location is the golgi apparatus. Plays a role in formation of mast cell secretory granules and mediates storage of various compounds in secretory vesicles. Required for storage of some proteases in both connective tissue and mucosal mast cells and for storage of granzyme B in T-lymphocytes. Plays a role in localizing neutrophil elastase in azurophil granules of neutrophils. Mediates processing of MMP2. Plays a role in cytotoxic cell granule-mediated apoptosis by forming a complex with granzyme B which is delivered to cells by perforin to induce apoptosis. Regulates the secretion of TNF-alpha and may also regulate protease secretion. Inhibits bone mineralization. The chain is Serglycin (Srgn) from Rattus norvegicus (Rat).